Reading from the N-terminus, the 540-residue chain is NADH-quinone oxidoreductase subunit N (540 aa).

The next 14 helical transmembrane spans lie at 24–44 (LSPM…EAFL), 54–74 (LVLA…LAGT), 88–108 (PTLF…LIIA), 158–178 (APGH…MLLF), 184–204 (LLTM…LCGL), 219–239 (YFLL…LLYG), 263–283 (ALIG…AVPF), 295–315 (PTPI…GAML), 331–351 (PVMW…AVTQ), 357–377 (MLAY…VAAN), 385–405 (MFYL…VTLV), 428–448 (VGGV…TSGF), 462–482 (GAVP…FFYV), and 505–525 (MFTA…GILP).

This sequence belongs to the complex I subunit 2 family. In terms of assembly, NDH-1 is composed of 14 different subunits. Subunits NuoA, H, J, K, L, M, N constitute the membrane sector of the complex.

It is found in the cell membrane. The enzyme catalyses a quinone + NADH + 5 H(+)(in) = a quinol + NAD(+) + 4 H(+)(out). Functionally, NDH-1 shuttles electrons from NADH, via FMN and iron-sulfur (Fe-S) centers, to quinones in the respiratory chain. The immediate electron acceptor for the enzyme in this species is believed to be a menaquinone. Couples the redox reaction to proton translocation (for every two electrons transferred, four hydrogen ions are translocated across the cytoplasmic membrane), and thus conserves the redox energy in a proton gradient. The chain is NADH-quinone oxidoreductase subunit N from Rhodococcus opacus (strain B4).